Consider the following 268-residue polypeptide: uncharacterized protein (268 aa).

This sequence to M.tuberculosis Rv0025 and Rv0026.

This is an uncharacterized protein from Mycobacterium tuberculosis (strain CDC 1551 / Oshkosh).